The chain runs to 277 residues: DNA-binding transcriptional activator MhpR (277 aa).

Residues 12-74 (VRGLTRGLML…PSDDSFRLTI (63 aa)) form the HTH iclR-type domain. Residues 34 to 53 (VGLLAELSGLHRTTVRRLLE) constitute a DNA-binding region (H-T-H motif). Positions 89–262 (ISALAAPLLG…AKQIEEGVES (174 aa)) constitute an IclR-ED domain.

Activator of the mhpABCDFE operon coding for components of the 3-hydroxyphenylpropionate degradation pathway. This chain is DNA-binding transcriptional activator MhpR (mhpR), found in Escherichia coli (strain K12).